The following is a 123-amino-acid chain: MPTINQLIAQPREVQKSRKKVPALQQSPQKRGVCTRVYTTTPKKPNSALRKVAKVRLTNGFEVIGYIPGEGHNLQEHSVVMIRGGRVKDLPGVRYHILRGVLDTQGVKNRKQRRSKYGAKRPK.

Asp-89 carries the post-translational modification 3-methylthioaspartic acid.

Belongs to the universal ribosomal protein uS12 family. Part of the 30S ribosomal subunit. Contacts proteins S8 and S17. May interact with IF1 in the 30S initiation complex.

Functionally, with S4 and S5 plays an important role in translational accuracy. In terms of biological role, interacts with and stabilizes bases of the 16S rRNA that are involved in tRNA selection in the A site and with the mRNA backbone. Located at the interface of the 30S and 50S subunits, it traverses the body of the 30S subunit contacting proteins on the other side and probably holding the rRNA structure together. The combined cluster of proteins S8, S12 and S17 appears to hold together the shoulder and platform of the 30S subunit. This is Small ribosomal subunit protein uS12 from Bradyrhizobium diazoefficiens (strain JCM 10833 / BCRC 13528 / IAM 13628 / NBRC 14792 / USDA 110).